We begin with the raw amino-acid sequence, 121 residues long: Large ribosomal subunit protein bL12 (121 aa).

Belongs to the bacterial ribosomal protein bL12 family. Homodimer. Part of the ribosomal stalk of the 50S ribosomal subunit. Forms a multimeric L10(L12)X complex, where L10 forms an elongated spine to which 2 to 4 L12 dimers bind in a sequential fashion. Binds GTP-bound translation factors.

Its function is as follows. Forms part of the ribosomal stalk which helps the ribosome interact with GTP-bound translation factors. Is thus essential for accurate translation. The polypeptide is Large ribosomal subunit protein bL12 (Xanthomonas axonopodis pv. citri (strain 306)).